The primary structure comprises 179 residues: Large ribosomal subunit protein uL10 (179 aa).

Residues 137 to 179 are binds L7/L12 dimers; that stretch reads KEELYAMLVGRVKAPITGLVFALSGILRNLVYVLNAIKEKKSE.

As to quaternary structure, part of the ribosomal stalk of the 50S ribosomal subunit. The N-terminus interacts with L11 and 23S rRNA to form the base of the stalk. The C-terminus forms an elongated spine to which 3 L12 dimers bind in a sequential fashion forming a heptameric L10(L12)2(L12)2(L12)2 complex.

In terms of biological role, forms part of the ribosomal stalk, playing a central role in the interaction of the ribosome with GTP-bound translation factors (such as IF-2, EF-Tu, EF-G and RF3). The polypeptide is Large ribosomal subunit protein uL10 (rplJ) (Thermotoga maritima (strain ATCC 43589 / DSM 3109 / JCM 10099 / NBRC 100826 / MSB8)).